The primary structure comprises 116 residues: SEGRSRLLGAPVPVRENDEGLQRALQFAMAEYNKASNDKYSSRVVRIISAKQQLVSGIKYIMEVEIGRTTCPKSSADLQSCEFHDEPEMAKYTTCNFVVYSIPWLNQIKLLKSSCQ.

The Secondary area of contact motif lies at 53 to 57; that stretch reads QLVSG. 2 disulfide bridges follow: Cys-71-Cys-81 and Cys-95-Cys-115. Ser-80 is modified (phosphoserine).

It belongs to the cystatin family.

It localises to the secreted. This protein binds tightly to and inhibits papain and cathepsin B. This is Cystatin from Coturnix japonica (Japanese quail).